We begin with the raw amino-acid sequence, 557 residues long: uncharacterized protein (557 aa).

An N-terminal signal peptide occupies residues 1 to 30; the sequence is MAPRRRRHTRIAGLRVVGTATLVAATTLTA. A lipid anchor (N-palmitoyl cysteine) is attached at Cys31. Cys31 carries the S-diacylglycerol cysteine lipid modification.

The protein to M.bovis Mb2616c and M.leprae ML0489.

Its subcellular location is the cell membrane. This is an uncharacterized protein from Mycobacterium tuberculosis (strain ATCC 25618 / H37Rv).